The primary structure comprises 87 residues: MGSRLPPAALTLKQFLVRQQVLGLYRRIVRAVRQIPGAADRQYLQDWARDEFRRNKGASEEIAIRMMISHGQRQLQELERALQLAKS.

Residues 1-19 constitute a mitochondrion transit peptide; that stretch reads MGSRLPPAALTLKQFLVRQ.

This sequence belongs to the complex I LYR family.

The protein localises to the mitochondrion. Its function is as follows. Involved in efficient integration of the N-module into mitochondrial respiratory chain complex I. This is LYR motif-containing protein 2 (lyrm2) from Xenopus laevis (African clawed frog).